The following is a 578-amino-acid chain: Moesin/ezrin/radixin homolog 1 (578 aa).

In terms of domain architecture, FERM spans 1 to 296 (MSPKALNVRV…GNHELYMRRR (296 aa)). Residues 463–555 (ASTTPQHHHV…HRENVRQGRD (93 aa)) are disordered. Positions 475 to 484 (DENENEEELT) are enriched in acidic residues. Positions 492 to 555 (VSRDLDTDEH…HRENVRQGRD (64 aa)) are enriched in basic and acidic residues. Thr559 bears the Phosphothreonine mark.

In terms of assembly, interacts with wgn. Interacts with Mer and arm at the adherens junction. Interacts with cytoskeletal actin at apical buds of microvilli in the precellularised embryo. Interacts with PCID2 (possibly via FERM domain). Phosphorylated on Thr-559. In the oocyte this phosphorylation is induced by phosphatidylinositol 4,5-bisphosphate (PtdIns[4,5]P(2)) generated by sktl.

It is found in the cell junction. The protein localises to the adherens junction. It localises to the cell projection. Its subcellular location is the microvillus. The protein resides in the rhabdomere. It is found in the cell membrane. The protein localises to the cytoplasm. It localises to the cytoskeleton. Its subcellular location is the cell cortex. The protein resides in the cilium. It is found in the flagellum. The protein localises to the nucleus. It localises to the nucleoplasm. Its subcellular location is the chromosome. Its function is as follows. Involved in connections of major cytoskeletal structures to the plasma membrane. Together with wgn, involved in control of axon targeting of R8 and R2-R5 photoreceptors, independent of egr. In the nucleus, recruited to sites of active transcription by RNA polymerase II where it has a role in nuclear mRNA export together with the mRNA export factor PCID2 and other messenger ribonucleoprotein (mRNP) particles. The chain is Moesin/ezrin/radixin homolog 1 (Moe) from Drosophila melanogaster (Fruit fly).